Reading from the N-terminus, the 425-residue chain is Imidazolonepropionase (425 aa).

Fe(3+) is bound by residues H78 and H80. H78 and H80 together coordinate Zn(2+). Positions 87, 150, and 183 each coordinate 4-imidazolone-5-propanoate. Position 150 (Y150) interacts with N-formimidoyl-L-glutamate. Fe(3+) is bound at residue H248. Residue H248 coordinates Zn(2+). Residue Q251 participates in 4-imidazolone-5-propanoate binding. Fe(3+) is bound at residue D323. D323 lines the Zn(2+) pocket. Residues N325 and G327 each coordinate N-formimidoyl-L-glutamate. A 4-imidazolone-5-propanoate-binding site is contributed by T328.

This sequence belongs to the metallo-dependent hydrolases superfamily. HutI family. Zn(2+) serves as cofactor. It depends on Fe(3+) as a cofactor.

It localises to the cytoplasm. It carries out the reaction 4-imidazolone-5-propanoate + H2O = N-formimidoyl-L-glutamate. It functions in the pathway amino-acid degradation; L-histidine degradation into L-glutamate; N-formimidoyl-L-glutamate from L-histidine: step 3/3. In terms of biological role, catalyzes the hydrolytic cleavage of the carbon-nitrogen bond in imidazolone-5-propanoate to yield N-formimidoyl-L-glutamate. It is the third step in the universal histidine degradation pathway. This chain is Imidazolonepropionase, found in Polaromonas sp. (strain JS666 / ATCC BAA-500).